The primary structure comprises 281 residues: ATP synthase gamma chain (281 aa).

This sequence belongs to the ATPase gamma chain family. In terms of assembly, F-type ATPases have 2 components, CF(1) - the catalytic core - and CF(0) - the membrane proton channel. CF(1) has five subunits: alpha(3), beta(3), gamma(1), delta(1), epsilon(1). CF(0) has three main subunits: a, b and c.

The protein localises to the cell membrane. Its function is as follows. Produces ATP from ADP in the presence of a proton gradient across the membrane. The gamma chain is believed to be important in regulating ATPase activity and the flow of protons through the CF(0) complex. The chain is ATP synthase gamma chain from Mesoplasma florum (strain ATCC 33453 / NBRC 100688 / NCTC 11704 / L1) (Acholeplasma florum).